Reading from the N-terminus, the 156-residue chain is Small ribosomal subunit protein uS7 (156 aa).

It belongs to the universal ribosomal protein uS7 family. As to quaternary structure, part of the 30S ribosomal subunit. Contacts proteins S9 and S11.

One of the primary rRNA binding proteins, it binds directly to 16S rRNA where it nucleates assembly of the head domain of the 30S subunit. Is located at the subunit interface close to the decoding center, probably blocks exit of the E-site tRNA. In Klebsiella pneumoniae (strain 342), this protein is Small ribosomal subunit protein uS7.